A 469-amino-acid chain; its full sequence is MIPVTSFRGKKVALFGLGGSGLVTARALVAGGAAVVAFDDNPDSVAKAQAEGIATADLHTIDWSSFSSFVLAPGVPLTHPKPHWSVDLAKAAGVEVIGDIELFIRERRVHAPDCPFIAITGTNGKSTTTALIAHILQSSGRDTQLGGNIGTAVLSLDPPKAQRFYVVECSSYQIDLAPTINPTAGILLNLTPDHLDRHGTMQHYADVKERLVAGSGTAIVGVDDSHSTLIADRIERAGVKVERISKRNVVSEGLYAEGSQILRAHGGTSSLLVDLDGIQTLRGSHNAQNAAAAIAACLAVGVSEEEIRAGLKSFPGLKHRMQPVGRRGNVTFVNDSKATNADAAAPALSSFDRIYWIAGGLPKAGGITSLSPLFPRIAKAYLIGEAAAEFAATLGEAVPYEISGTLDKAVQHAAADAEKDATAGNVVMLSPACASFDQYKNFEIRGDSFVAQVAALEGMTMLVHSGKGG.

G121–T127 provides a ligand contact to ATP.

It belongs to the MurCDEF family.

The protein localises to the cytoplasm. The enzyme catalyses UDP-N-acetyl-alpha-D-muramoyl-L-alanine + D-glutamate + ATP = UDP-N-acetyl-alpha-D-muramoyl-L-alanyl-D-glutamate + ADP + phosphate + H(+). The protein operates within cell wall biogenesis; peptidoglycan biosynthesis. Cell wall formation. Catalyzes the addition of glutamate to the nucleotide precursor UDP-N-acetylmuramoyl-L-alanine (UMA). The polypeptide is UDP-N-acetylmuramoylalanine--D-glutamate ligase (Agrobacterium fabrum (strain C58 / ATCC 33970) (Agrobacterium tumefaciens (strain C58))).